We begin with the raw amino-acid sequence, 56 residues long: MKKVIMLLLIFALFAYALSASDPNKCLKKGSKCVSVGKPCCKPATCNIYANRCIGW.

Positions Met1–Ser19 are cleaved as a signal peptide. 3 disulfides stabilise this stretch: Cys26–Cys41, Cys33–Cys46, and Cys40–Cys53.

The protein belongs to the limacoditoxin-22 family. In terms of tissue distribution, expressed by the venom secretory cell of the spine. The spine is a cuticular structure containing a single large nucleated venom-secreting cell at its base. It is an independent unit capable of producing, storing and injecting venom. On the back of D.vulnerans caterpillars, spines are grouped together by 50 to 100 to form scoli, of which there are eight in D.vulnerans.

The protein localises to the secreted. Its function is as follows. Probable toxin. Shows a moderate antiparasitic activity against the major pathogenic nematode of ruminants (H.contortus, IC(50)=22.1 uM). Does not show insecticidal activities. Does not induce increase in intracellular calcium in mouse DRG neurons, suggesting that it does not induce pain. This Doratifera vulnerans (Mottled cup moth) protein is U-limacoditoxin(3)-Dv21.